The chain runs to 290 residues: Probable ATP-dependent kinase TDA10 (290 aa).

ATP is bound at residue 38–45; that stretch reads GPQGSGKS.

Belongs to the GLYK kinase family.

Its subcellular location is the cytoplasm. The protein localises to the nucleus. Functionally, ATP-dependent kinase whose specificity is not yet known. The chain is Probable ATP-dependent kinase TDA10 (TDA10) from Saccharomyces cerevisiae (strain ATCC 204508 / S288c) (Baker's yeast).